The sequence spans 183 residues: Ribosome rescue factor SmrB (183 aa).

The 76-residue stretch at Leu-98–Glu-173 folds into the Smr domain.

Belongs to the SmrB family. In terms of assembly, associates with collided ribosomes, but not with correctly translating polysomes.

Acts as a ribosome collision sensor. Detects stalled/collided disomes (pairs of ribosomes where the leading ribosome is stalled and a second ribosome has collided with it) and endonucleolytically cleaves mRNA at the 5' boundary of the stalled ribosome. Stalled/collided disomes form a new interface (primarily via the 30S subunits) that binds SmrB. Cleaved mRNA becomes available for tmRNA ligation, leading to ribosomal subunit dissociation and rescue of stalled ribosomes. This Escherichia coli (strain 55989 / EAEC) protein is Ribosome rescue factor SmrB.